A 135-amino-acid polypeptide reads, in one-letter code: Endoribonuclease YbeY (135 aa).

Zn(2+) is bound by residues His-102, His-106, and His-112.

This sequence belongs to the endoribonuclease YbeY family. It depends on Zn(2+) as a cofactor.

The protein localises to the cytoplasm. Its function is as follows. Single strand-specific metallo-endoribonuclease involved in late-stage 70S ribosome quality control and in maturation of the 3' terminus of the 16S rRNA. The sequence is that of Endoribonuclease YbeY from Rubrobacter xylanophilus (strain DSM 9941 / JCM 11954 / NBRC 16129 / PRD-1).